The chain runs to 101 residues: Large ribosomal subunit protein uL24 (101 aa).

The protein belongs to the universal ribosomal protein uL24 family. As to quaternary structure, part of the 50S ribosomal subunit.

Its function is as follows. One of two assembly initiator proteins, it binds directly to the 5'-end of the 23S rRNA, where it nucleates assembly of the 50S subunit. Functionally, one of the proteins that surrounds the polypeptide exit tunnel on the outside of the subunit. The polypeptide is Large ribosomal subunit protein uL24 (Streptococcus mutans serotype c (strain ATCC 700610 / UA159)).